Consider the following 373-residue polypeptide: MRLPMQKLLIPTLLGLAMFAGSVNAAAPLRPPQGYFAPVEAFKTGDFKNDCDAMPPPYTGSLQFRSKYEGSDKARSTLNVQSEKAFRDSTADITKLEKDTSKRVMQFMRDGRPEQLECTLNWLTSWAKADALMSKDFNHTGKSMRKWALGSMASAYVRLKFSDSHPLANHQQESQLIEAWFNKLADQVVSDWDNLPLEKTNNHSYWAAWSVMATSVATNRRDLFDWAVKEYKVGVNQVDDQGFLPNELKRQQRALSYHNYALPPLSMIASFALVNGVDLRQENNSALKRLGDKVLAGVKDPEIFEKKNGKEQDMKDLKEDMKYAWLEPFCTLYTCAPDVIERKHGMQPFKTFRLGGDLTKVYDPTHEKGNKGS.

A signal peptide spans 1 to 25 (MRLPMQKLLIPTLLGLAMFAGSVNA). Residues 66 to 67 (SK), 139 to 140 (HT), and Tyr257 contribute to the substrate site.

This sequence belongs to the polysaccharide lyase 5 family.

It localises to the periplasm. It catalyses the reaction Eliminative cleavage of alginate to give oligosaccharides with 4-deoxy-alpha-L-erythro-hex-4-enuronosyl groups at their non-reducing ends and beta-D-mannuronate at their reducing end.. Its function is as follows. Catalyzes the depolymerization of alginate by cleaving the beta-1,4 glycosidic bond between two adjacent sugar residues via a beta-elimination mechanism. May serve to degrade mislocalized alginate that is trapped in the periplasmic space. In Pseudomonas fluorescens, this protein is Alginate lyase.